Consider the following 197-residue polypeptide: Rac-like GTP-binding protein ARAC11 (197 aa).

Position 13 to 20 (13 to 20 (GDGAVGKT)) interacts with GTP. An Effector region motif is present at residues 35-43 (YVPTVFDNF). Residues 60 to 64 (DTAGQ) and 118 to 121 (TKLD) contribute to the GTP site. Position 194 is a cysteine methyl ester (cysteine 194). Cysteine 194 carries S-geranylgeranyl cysteine lipidation. A propeptide spans 195–197 (SIL) (removed in mature form).

Belongs to the small GTPase superfamily. Rho family. Part of a complex containing ROPGEF1 and PRK2. Interacts with UGT1, ICR1, ICR2, ICR3, ICR4 and ICR5. Interacts with PHIP1 when activated by GTP. In terms of tissue distribution, exclusively expressed in mature pollen and pollen tubes.

Its subcellular location is the cytoplasm. It localises to the membrane. The enzyme catalyses GTP + H2O = GDP + phosphate + H(+). May be involved in cell polarity control during the actin-dependent tip growth of pollen tubes. May regulate callose synthase 1 (CALS1) activity through the interaction with UGT1. Functionally, inactive GDP-bound Rho GTPases reside in the cytosol, are found in a complex with Rho GDP-dissociation inhibitors (Rho GDIs), and are released from the GDI protein in order to translocate to membranes upon activation. The chain is Rac-like GTP-binding protein ARAC11 from Arabidopsis thaliana (Mouse-ear cress).